The primary structure comprises 77 residues: U8-lycotoxin-Ls1l (77 aa).

The signal sequence occupies residues 1–20 (MKLMIFTGLVLFAIVSLIEA). The propeptide occupies 21–26 (QAENEK).

This sequence belongs to the neurotoxin 19 (CSTX) family. 08 (U8-Lctx) subfamily. Contains 4 disulfide bonds. In terms of tissue distribution, expressed by the venom gland.

It is found in the secreted. The sequence is that of U8-lycotoxin-Ls1l from Lycosa singoriensis (Wolf spider).